The following is a 253-amino-acid chain: Imidazole glycerol phosphate synthase subunit HisF (253 aa).

Catalysis depends on residues D11 and D130.

It belongs to the HisA/HisF family. As to quaternary structure, heterodimer of HisH and HisF.

It localises to the cytoplasm. It carries out the reaction 5-[(5-phospho-1-deoxy-D-ribulos-1-ylimino)methylamino]-1-(5-phospho-beta-D-ribosyl)imidazole-4-carboxamide + L-glutamine = D-erythro-1-(imidazol-4-yl)glycerol 3-phosphate + 5-amino-1-(5-phospho-beta-D-ribosyl)imidazole-4-carboxamide + L-glutamate + H(+). It participates in amino-acid biosynthesis; L-histidine biosynthesis; L-histidine from 5-phospho-alpha-D-ribose 1-diphosphate: step 5/9. In terms of biological role, IGPS catalyzes the conversion of PRFAR and glutamine to IGP, AICAR and glutamate. The HisF subunit catalyzes the cyclization activity that produces IGP and AICAR from PRFAR using the ammonia provided by the HisH subunit. This Clostridium botulinum (strain Okra / Type B1) protein is Imidazole glycerol phosphate synthase subunit HisF.